A 302-amino-acid chain; its full sequence is 4-hydroxy-tetrahydrodipicolinate synthase (302 aa).

A pyruvate-binding site is contributed by T55. The Proton donor/acceptor role is filled by Y143. K171 functions as the Schiff-base intermediate with substrate in the catalytic mechanism. I213 lines the pyruvate pocket.

The protein belongs to the DapA family. As to quaternary structure, homotetramer; dimer of dimers.

The protein resides in the cytoplasm. It catalyses the reaction L-aspartate 4-semialdehyde + pyruvate = (2S,4S)-4-hydroxy-2,3,4,5-tetrahydrodipicolinate + H2O + H(+). The protein operates within amino-acid biosynthesis; L-lysine biosynthesis via DAP pathway; (S)-tetrahydrodipicolinate from L-aspartate: step 3/4. Catalyzes the condensation of (S)-aspartate-beta-semialdehyde [(S)-ASA] and pyruvate to 4-hydroxy-tetrahydrodipicolinate (HTPA). The chain is 4-hydroxy-tetrahydrodipicolinate synthase from Psychrobacter sp. (strain PRwf-1).